The sequence spans 246 residues: Endonuclease V (246 aa).

Mg(2+) contacts are provided by D50 and D120.

It belongs to the endonuclease V family. The cofactor is Mg(2+).

Its subcellular location is the cytoplasm. The catalysed reaction is Endonucleolytic cleavage at apurinic or apyrimidinic sites to products with a 5'-phosphate.. DNA repair enzyme involved in the repair of deaminated bases. Selectively cleaves double-stranded DNA at the second phosphodiester bond 3' to a deoxyinosine leaving behind the intact lesion on the nicked DNA. This chain is Endonuclease V, found in Gloeobacter violaceus (strain ATCC 29082 / PCC 7421).